Reading from the N-terminus, the 84-residue chain is UPF0297 protein Csac_1773 (84 aa).

The protein belongs to the UPF0297 family.

This is UPF0297 protein Csac_1773 from Caldicellulosiruptor saccharolyticus (strain ATCC 43494 / DSM 8903 / Tp8T 6331).